We begin with the raw amino-acid sequence, 290 residues long: UPF0761 membrane protein YihY (290 aa).

The next 6 membrane-spanning stretches (helical) occupy residues 44 to 64 (LLSL…FPMF), 104 to 124 (VGAC…DSAL), 140 to 160 (FAVY…SLAI), 183 to 203 (IFPL…VPTI), 210 to 230 (AIVG…GFAL), and 244 to 264 (VLAV…IVLL).

It belongs to the UPF0761 family.

Its subcellular location is the cell inner membrane. This chain is UPF0761 membrane protein YihY, found in Escherichia coli O1:K1 / APEC.